The primary structure comprises 162 residues: Cyanate hydratase (162 aa).

Active-site residues include Arg103, Glu106, and Ser129.

This sequence belongs to the cyanase family.

The catalysed reaction is cyanate + hydrogencarbonate + 3 H(+) = NH4(+) + 2 CO2. Catalyzes the reaction of cyanate with bicarbonate to produce ammonia and carbon dioxide. This is Cyanate hydratase from Phaeosphaeria nodorum (strain SN15 / ATCC MYA-4574 / FGSC 10173) (Glume blotch fungus).